The primary structure comprises 372 residues: MSKRDYYEVLGVDRNASVEEVKKAYRKLARKYHPDVNKEEDAEAKFKEVKEAYDTLSDPQKKARYDQFGHADPNQGFGGAGASGDFGGFSDIFDMFFGGGGGRRNPNAPRQGDDLQYTMTLEFKEAVFGKETEIEIPREETCGTCHGSGAKPGTKPDTCSHCGGSGQLNVEQNTPFGRVVNRRVCNYCEGTGKIIKQKCATCSGKGKVRKRKKINIQVPAGIDNGQQLRVAGQGEAGANGGPPGDLYVVFQVKPHEFFERDGEDIYCEVPLTFPQVALGDEIEVPTLTGKVKLKIPAGTQTGTSFRLRGKGVPNVHGRGQGDQHVQVRVVTPKNLTENEKELMREFAGMSGGRPEEQNDGFFDKLRRAFKGD.

A J domain is found at 5 to 69 (DYYEVLGVDR…QKKARYDQFG (65 aa)). A CR-type zinc finger spans residues 129–211 (GKETEIEIPR…CSGKGKVRKR (83 aa)). Positions 142, 145, 159, 162, 185, 188, 199, and 202 each coordinate Zn(2+). CXXCXGXG motif repeat units follow at residues 142 to 149 (CGTCHGSG), 159 to 166 (CSHCGGSG), 185 to 192 (CNYCEGTG), and 199 to 206 (CATCSGKG).

This sequence belongs to the DnaJ family. In terms of assembly, homodimer. Requires Zn(2+) as cofactor.

Its subcellular location is the cytoplasm. Participates actively in the response to hyperosmotic and heat shock by preventing the aggregation of stress-denatured proteins and by disaggregating proteins, also in an autonomous, DnaK-independent fashion. Unfolded proteins bind initially to DnaJ; upon interaction with the DnaJ-bound protein, DnaK hydrolyzes its bound ATP, resulting in the formation of a stable complex. GrpE releases ADP from DnaK; ATP binding to DnaK triggers the release of the substrate protein, thus completing the reaction cycle. Several rounds of ATP-dependent interactions between DnaJ, DnaK and GrpE are required for fully efficient folding. Also involved, together with DnaK and GrpE, in the DNA replication of plasmids through activation of initiation proteins. The sequence is that of Chaperone protein DnaJ from Shouchella clausii (strain KSM-K16) (Alkalihalobacillus clausii).